A 106-amino-acid polypeptide reads, in one-letter code: Small ribosomal subunit protein uS10 (106 aa).

The protein belongs to the universal ribosomal protein uS10 family. As to quaternary structure, part of the 30S ribosomal subunit.

Functionally, involved in the binding of tRNA to the ribosomes. In Synechococcus sp. (strain CC9902), this protein is Small ribosomal subunit protein uS10.